Consider the following 679-residue polypeptide: MTKDLLLELGLEELPAYVVTPSEKQLGQKMVKFLEDHRLSFETVQTFSTPRRLAVRVKGLADQQTDLTEDFKGPSKKIALDAEGNFSKAAQGFVRGKGLSVDDIEFREVKGEEYVYVTKHETGKSAIDVLASVTEVLTELTFPVNMHWANNSFEYIRPVHTLVVLLDDQALELDFLDIHSGRISRGHRFLGSDTEISSASSYEDDLRQQFVIADAKERQQMIVNQIHAIEEKKNISVEIDEDLLNEVLNLVEYPTAFLGSFDEKYLDVPEEVLVTSMKNHQRYFVVRDRDGKLLPNFISVRNGNAEHIENVIKGNEKVLVARLEDGEFFWQEDQKLNIADLVEKLKQVTFHEKIGSLYEHMDRVKVISQYLAEKADLSDEEKLAVLRAASIYKFDLLTGMVDEFDELQGIMGEKYALLAGEQPAVAAAIREHYMPTSADGELPETRVGAILALADKFDTLLSFFSVGLIPSGSNDPYALRRATQGIVRILEAFGWDIPLDELVTNLYGLSFASLDYANQKEVMAFISARIEKMIGSKVPKDIREAVLESDTYIVSLILEASQALVQKSKDAQYKVSVESLSRAFNLAEKVTHSVLVDSSLFENNQEKALYQAILSLELTEDMHDNLDKLFALSPIINDFFDNTMVMTDDEKMKQNRLALLNSLVAKARTVAAFNLLNTK.

It belongs to the class-II aminoacyl-tRNA synthetase family. In terms of assembly, tetramer of two alpha and two beta subunits.

The protein resides in the cytoplasm. It carries out the reaction tRNA(Gly) + glycine + ATP = glycyl-tRNA(Gly) + AMP + diphosphate. This is Glycine--tRNA ligase beta subunit from Streptococcus agalactiae serotype Ia (strain ATCC 27591 / A909 / CDC SS700).